We begin with the raw amino-acid sequence, 661 residues long: Vasorin (661 aa).

The N-terminal stretch at 1–19 is a signal peptide; the sequence is MWHLLVWIILLATAQQMIT. Residues 20–50 enclose the LRRNT domain; that stretch reads EGCPAGCQCNTPQTVFCLARKNSNFPRSVPP. The Extracellular portion of the chain corresponds to 20-563; the sequence is EGCPAGCQCN…VTQSQEGNLT (544 aa). 10 LRR repeats span residues 52-72, 75-96, 99-120, 123-144, 147-168, 169-189, 191-212, 215-237, 238-258, and 259-281; these read TLNL…SFIG, GLHL…VFRN, NLSN…TFQG, RLER…AFKG, SLLE…SLPH, LLLL…VFNA, NIES…LLSG, NLHE…HGLT, KLNI…LSNL, and PALQ…LFRS. N-linked (GlcNAc...) asparagine glycosylation is present at Asn99. The 54-residue stretch at 293–346 folds into the LRRCT domain; that stretch reads NPFNCVCSLGWLSEWMRVSGVVLLRPDETRCHFPPKNAGKTLRQLRDSEYGCPA. The segment covering 348–385 has biased composition (low complexity); the sequence is TTIQMPSTMPPSTTTGPPTTTKHLQTEAPTTASTTTTT. Positions 348–395 are disordered; that stretch reads TTIQMPSTMPPSTTTGPPTTTKHLQTEAPTTASTTTTTIPHQEQEEDT. The EGF-like domain occupies 403-440; it reads EDTLCPPQTCLNGGSCHLDPTGQLECECPPGFQGTYCE. 3 disulfides stabilise this stretch: Cys407-Cys418, Cys412-Cys428, and Cys430-Cys439. In terms of domain architecture, Fibronectin type-III spans 455 to 543; it reads EQVKIIEVTV…EEDLCTETHT (89 aa). N-linked (GlcNAc...) asparagine glycans are attached at residues Asn518 and Asn561. A helical membrane pass occupies residues 564-584; that stretch reads LVLVPAVAAGILLSAAVAAAA. At 585 to 661 the chain is on the cytoplasmic side; it reads CYARRRKGKG…PTGRLPHSYF (77 aa). The segment at 591–661 is disordered; that stretch reads KGKGHSVEDG…PTGRLPHSYF (71 aa). The span at 606 to 623 shows a compositional bias: basic and acidic residues; sequence DGVKKGLDGKGEVKKLSE.

Its subcellular location is the membrane. In terms of biological role, may act as an inhibitor of TGF-beta signaling. This chain is Vasorin (vasn), found in Xenopus tropicalis (Western clawed frog).